The chain runs to 105 residues: T cell receptor alpha variable 40 (105 aa).

Residues 1-19 (MNSSLDFLILILMFGGTSS) form the signal peptide. The 86-residue stretch at 20–105 (NSVKQTGQIT…DSAVYYCLLG (86 aa)) folds into the Ig-like domain. N-linked (GlcNAc...) asparagine glycosylation occurs at Asn-39. Cys-40 and Cys-102 form a disulfide bridge.

Alpha-beta TR is a heterodimer composed of an alpha and beta chain; disulfide-linked. The alpha-beta TR is associated with the transmembrane signaling CD3 coreceptor proteins to form the TR-CD3 (TcR or TCR). The assembly of alpha-beta TR heterodimers with CD3 occurs in the endoplasmic reticulum where a single alpha-beta TR heterodimer associates with one CD3D-CD3E heterodimer, one CD3G-CD3E heterodimer and one CD247 homodimer forming a stable octameric structure. CD3D-CD3E and CD3G-CD3E heterodimers preferentially associate with TR alpha and TR beta chains, respectively. The association of the CD247 homodimer is the last step of TcR assembly in the endoplasmic reticulum and is required for transport to the cell surface.

It is found in the cell membrane. V region of the variable domain of T cell receptor (TR) alpha chain that participates in the antigen recognition. Alpha-beta T cell receptors are antigen specific receptors which are essential to the immune response and are present on the cell surface of T lymphocytes. Recognize peptide-major histocompatibility (MH) (pMH) complexes that are displayed by antigen presenting cells (APC), a prerequisite for efficient T cell adaptive immunity against pathogens. Binding of alpha-beta TR to pMH complex initiates TR-CD3 clustering on the cell surface and intracellular activation of LCK that phosphorylates the ITAM motifs of CD3G, CD3D, CD3E and CD247 enabling the recruitment of ZAP70. In turn ZAP70 phosphorylates LAT, which recruits numerous signaling molecules to form the LAT signalosome. The LAT signalosome propagates signal branching to three major signaling pathways, the calcium, the mitogen-activated protein kinase (MAPK) kinase and the nuclear factor NF-kappa-B (NF-kB) pathways, leading to the mobilization of transcription factors that are critical for gene expression and essential for T cell growth and differentiation. The T cell repertoire is generated in the thymus, by V-(D)-J rearrangement. This repertoire is then shaped by intrathymic selection events to generate a peripheral T cell pool of self-MH restricted, non-autoaggressive T cells. Post-thymic interaction of alpha-beta TR with the pMH complexes shapes TR structural and functional avidity. The protein is T cell receptor alpha variable 40 of Homo sapiens (Human).